The following is a 330-amino-acid chain: Tryptophan--tRNA ligase (330 aa).

ATP is bound by residues 10-12 (QTT) and 18-19 (GN). Residues 11–19 (TTGALHLGN) carry the 'HIGH' region motif. Residue D134 participates in L-tryptophan binding. ATP-binding positions include 146–148 (GED), I186, and 195–199 (KMSKS). The 'KMSKS' region signature appears at 195–199 (KMSKS).

This sequence belongs to the class-I aminoacyl-tRNA synthetase family. Homodimer.

It is found in the cytoplasm. It carries out the reaction tRNA(Trp) + L-tryptophan + ATP = L-tryptophyl-tRNA(Trp) + AMP + diphosphate + H(+). Its function is as follows. Catalyzes the attachment of tryptophan to tRNA(Trp). In Rickettsia prowazekii (strain Madrid E), this protein is Tryptophan--tRNA ligase.